We begin with the raw amino-acid sequence, 230 residues long: Orotidine 5'-phosphate decarboxylase (230 aa).

Residues D11, K34, 61–70 (DLKLHDIPNT), T117, R179, Q188, G208, and R209 each bind substrate. The Proton donor role is filled by K63.

It belongs to the OMP decarboxylase family. Type 1 subfamily. As to quaternary structure, homodimer.

It catalyses the reaction orotidine 5'-phosphate + H(+) = UMP + CO2. Its pathway is pyrimidine metabolism; UMP biosynthesis via de novo pathway; UMP from orotate: step 2/2. Its function is as follows. Catalyzes the decarboxylation of orotidine 5'-monophosphate (OMP) to uridine 5'-monophosphate (UMP). The chain is Orotidine 5'-phosphate decarboxylase from Streptococcus pyogenes serotype M49 (strain NZ131).